Reading from the N-terminus, the 392-residue chain is Speckle-type POZ protein-like B (392 aa).

The region spanning 31–161 is the MATH domain; the sequence is KFSYMWTINN…DDKLTLFCEV (131 aa). The BTB domain maps to 200–267; the sequence is TDCSLFVGGQ…IYTGKAPNLE (68 aa).

The protein belongs to the Tdpoz family. Homodimer. Heterodimer with SPOP. Component of cullin-RING-based BCR (BTB-CUL3-RBX1) E3 ubiquitin-protein ligase complexes containing homodimeric SPOPL or the heterodimer formed by SPOP and SPOPL.

Its subcellular location is the nucleus. It functions in the pathway protein modification; protein ubiquitination. In terms of biological role, component of a cullin-RING-based BCR (BTB-CUL3-RBX1) E3 ubiquitin-protein ligase complex that mediates the ubiquitination and subsequent proteasomal degradation of target proteins, but with relatively low efficiency. The chain is Speckle-type POZ protein-like B (spoplb) from Danio rerio (Zebrafish).